A 714-amino-acid chain; its full sequence is Choline transporter-like protein 5 (714 aa).

Topologically, residues 1–33 are cytoplasmic; sequence MGRRSAAPTSPFGEPRKFDPKFKGPIGKRHCTD. The helical transmembrane segment at 34–54 threads the bilayer; sequence VLCCIIFVVVILGYIALGVVA. Over 55–237 the chain is Extracellular; that stretch reads WIHGDPRKII…KIFEDYASSW (183 aa). N-linked (GlcNAc...) asparagine glycans are attached at residues Asn-83, Asn-132, Asn-192, and Asn-205. The chain crosses the membrane as a helical span at residues 238-258; the sequence is YWILIALFIAMVVSLLFLILL. Over 259–261 the chain is Cytoplasmic; sequence RFT. A helical transmembrane segment spans residues 262 to 282; it reads AGVFFWIFIIGVIGVVGYGIW. Over 283–320 the chain is Extracellular; it reads HCFWEYDSLKGVPGADLTIYDIGLQTDFRVYLQLRQTW. Residues 321–341 traverse the membrane as a helical segment; it reads LAFMILLCIVEVIIILMLIFL. Residues 342–346 are Cytoplasmic-facing; that stretch reads RNRIR. Residues 347 to 367 traverse the membrane as a helical segment; it reads IAIALLQEGSRAIGYIMSTLF. Residues 368–369 are Extracellular-facing; it reads YP. A helical membrane pass occupies residues 370–390; the sequence is IITFILIAICISYWAVTAVFM. Topologically, residues 391–455 are cytoplasmic; the sequence is ATSGEPIYKV…QYILIFQLCN (65 aa). The chain crosses the membrane as a helical span at residues 456 to 476; sequence VFVFLWLVNFSIALGQCTLAG. The Extracellular portion of the chain corresponds to 477–510; it reads AFASYYWAFKKPADIPACPLFSSFGRAIRYHTGS. A helical membrane pass occupies residues 511–531; the sequence is LALGSLILALVQFIRIILEYL. Topologically, residues 532–605 are cytoplasmic; that stretch reads DHKLKASQNS…RVAVLDKVTD (74 aa). Residues 606–626 form a helical membrane-spanning segment; it reads FLLFLGKVFVTGSVGVLAFFF. Residues 627–644 lie on the Extracellular side of the membrane; sequence FTRKIPVLTDEAPALNYY. Residues 645 to 665 traverse the membrane as a helical segment; the sequence is WVPLLTVLIGSYLIAHGFFSV. Topologically, residues 666–711 are cytoplasmic; that stretch reads YAMCVDTLFLCFCEDLERNNGSSSKPYYMSPNLHRILGKKEILSKK.

This sequence belongs to the CTL (choline transporter-like) family.

It is found in the cell membrane. It carries out the reaction choline(out) + n H(+)(in) = choline(in) + n H(+)(out). Functionally, choline/H+ antiporter. In Xenopus tropicalis (Western clawed frog), this protein is Choline transporter-like protein 5 (slc44a5).